The following is a 564-amino-acid chain: R-linalool synthase (564 aa).

Residues Asp-320, Asp-324, Asp-464, Thr-468, and Glu-472 each coordinate Mg(2+). A DDXXD motif motif is present at residues 320 to 324 (DDVYD).

This sequence belongs to the terpene synthase family. Mg(2+) is required as a cofactor. It depends on Mn(2+) as a cofactor.

It carries out the reaction (2E)-geranyl diphosphate + H2O = (R)-linalool + diphosphate. Specifically catalyzes production of (R)-(-)-linalool, the main component of lavender essential oil. This is R-linalool synthase from Lavandula angustifolia (Lavender).